Reading from the N-terminus, the 554-residue chain is Probable oligo-1,6-glucosidase 3 (554 aa).

The active-site Nucleophile is the Asp199. Residue Glu256 is the Proton donor of the active site.

This sequence belongs to the glycosyl hydrolase 13 family.

It is found in the cytoplasm. It catalyses the reaction Hydrolysis of (1-&gt;6)-alpha-D-glucosidic linkages in some oligosaccharides produced from starch and glycogen by alpha-amylase, and in isomaltose.. This chain is Probable oligo-1,6-glucosidase 3 (yugT), found in Bacillus subtilis (strain 168).